The sequence spans 276 residues: tRNA (guanine-N(7)-)-methyltransferase (276 aa).

The interval 1-23 (MRPDPAPLDPTDASPAQARRHQP) is disordered. 4 residues coordinate S-adenosyl-L-methionine: E103, E128, D155, and D178. The active site involves D178. Residues K182, D214, and 252–255 (TRYE) each bind substrate.

This sequence belongs to the class I-like SAM-binding methyltransferase superfamily. TrmB family.

It carries out the reaction guanosine(46) in tRNA + S-adenosyl-L-methionine = N(7)-methylguanosine(46) in tRNA + S-adenosyl-L-homocysteine. Its pathway is tRNA modification; N(7)-methylguanine-tRNA biosynthesis. In terms of biological role, catalyzes the formation of N(7)-methylguanine at position 46 (m7G46) in tRNA. The polypeptide is tRNA (guanine-N(7)-)-methyltransferase (Cutibacterium acnes (strain DSM 16379 / KPA171202) (Propionibacterium acnes)).